Here is a 201-residue protein sequence, read N- to C-terminus: Ran-specific GTPase-activating protein (201 aa).

The span at 1-26 (MAAAKDTHEDHDTSTENTDESNHDPQ) shows a compositional bias: basic and acidic residues. The interval 1–35 (MAAAKDTHEDHDTSTENTDESNHDPQFEPIVSLPE) is disordered. A2 is subject to N-acetylalanine. 2 positions are modified to phosphothreonine: T13 and T18. 2 positions are modified to phosphoserine: S21 and S60. Positions 26 to 164 (QFEPIVSLPE…FEECRKEIEE (139 aa)) constitute a RanBD1 domain. Residue K150 is modified to N6-acetyllysine; alternate. K150 is subject to N6-succinyllysine; alternate. Residues 163-201 (EEREKKAGSGKNDHAEKVAEKLEALSVKEETKEDAEEKQ) form a disordered region. K183 is modified (N6-acetyllysine). S188 bears the Phosphoserine mark. Residue K190 forms a Glycyl lysine isopeptide (Lys-Gly) (interchain with G-Cter in SUMO2) linkage.

It belongs to the RANBP1 family. Interacts with RAN (via C-terminus of GTP-bound form) but not with GDP-bound RAN. Identified in a complex composed of RAN, RANGAP1 and RANBP1. Identified in a complex that contains TNPO1, RAN and RANBP1. Identified in a complex that contains CSE1L, KPNA2, RAN and RANBP1. Identified in a complex with nucleotide-free RAN and RCC1.

Plays a role in RAN-dependent nucleocytoplasmic transport. Alleviates the TNPO1-dependent inhibition of RAN GTPase activity and mediates the dissociation of RAN from proteins involved in transport into the nucleus. Induces a conformation change in the complex formed by XPO1 and RAN that triggers the release of the nuclear export signal of cargo proteins. Promotes the disassembly of the complex formed by RAN and importin beta. Promotes dissociation of RAN from a complex with KPNA2 and CSE1L. Required for normal mitotic spindle assembly and normal progress through mitosis via its effect on RAN. Does not increase the RAN GTPase activity by itself, but increases GTP hydrolysis mediated by RANGAP1. Inhibits RCC1-dependent exchange of RAN-bound GDP by GTP. The protein is Ran-specific GTPase-activating protein (RANBP1) of Homo sapiens (Human).